A 379-amino-acid polypeptide reads, in one-letter code: CCN family member 1 (379 aa).

The first 24 residues, 1-24, serve as a signal peptide directing secretion; that stretch reads MSSSTIKTLAVAVTLLHLTRLALS. The 70-residue stretch at 25-94 folds into the IGFBP N-terminal domain; the sequence is TCPAACHCPL…TALKGICRAQ (70 aa). Cystine bridges form between C26-C50, C30-C52, C32-C53, C39-C56, C64-C78, and C70-C91. In terms of domain architecture, VWFC spans 98–164; sequence RPCEYNSRIY…GQCCEEWVCD (67 aa). At S184 the chain carries Phosphoserine. Residues 226–271 form the TSP type-1 domain; that stretch reads KCIVQTTSWSQCSKSCGTGISTRVTNDNSECRLVKETRICEVRPCG. Residues 277–313 form a heparin-binding region; it reads SLKKGKKCSKTKKSPEPVRFTYAGCSSVKKYRPKYCG. Intrachain disulfides connect C284–C321, C301–C335, C312–C351, C315–C353, and C320–C357. Positions 284–358 constitute a CTCK domain; that stretch reads CSKTKKSPEP…QSCKCNYNCP (75 aa).

This sequence belongs to the CCN family. Interaction with integrins is heparin- and cell-type-dependent and promotes cell adhesion.

The protein resides in the secreted. Promotes cell proliferation, chemotaxis, angiogenesis and cell adhesion. Appears to play a role in wound healing by up-regulating, in skin fibroblasts, the expression of a number of genes involved in angiogenesis, inflammation and matrix remodeling including VEGA-A, VEGA-C, MMP1, MMP3, TIMP1, uPA, PAI-1 and integrins alpha-3 and alpha-5. CCN1-mediated gene regulation is dependent on heparin-binding. Down-regulates the expression of alpha-1 and alpha-2 subunits of collagen type-1. Promotes cell adhesion and adhesive signaling through integrin alpha-6/beta-1, cell migration through integrin alpha-1/beta-5 and cell proliferation through integrin alpha-v/beta-3. This is CCN family member 1 from Rattus norvegicus (Rat).